The primary structure comprises 257 residues: Type III pantothenate kinase (257 aa).

6-13 (DCGNTNTV) provides a ligand contact to ATP. 107-110 (GPDR) is a binding site for substrate. D109 functions as the Proton acceptor in the catalytic mechanism. A K(+)-binding site is contributed by D129. Position 132 (T132) interacts with ATP. T184 serves as a coordination point for substrate.

This sequence belongs to the type III pantothenate kinase family. As to quaternary structure, homodimer. Requires NH4(+) as cofactor. K(+) is required as a cofactor.

The protein localises to the cytoplasm. The enzyme catalyses (R)-pantothenate + ATP = (R)-4'-phosphopantothenate + ADP + H(+). It functions in the pathway cofactor biosynthesis; coenzyme A biosynthesis; CoA from (R)-pantothenate: step 1/5. Catalyzes the phosphorylation of pantothenate (Pan), the first step in CoA biosynthesis. In Cereibacter sphaeroides (strain ATCC 17025 / ATH 2.4.3) (Rhodobacter sphaeroides), this protein is Type III pantothenate kinase.